The chain runs to 180 residues: ATP synthase subunit delta (180 aa).

It belongs to the ATPase delta chain family. In terms of assembly, F-type ATPases have 2 components, F(1) - the catalytic core - and F(0) - the membrane proton channel. F(1) has five subunits: alpha(3), beta(3), gamma(1), delta(1), epsilon(1). CF(0) has four main subunits: a(1), b(1), b'(1) and c(10-14). The alpha and beta chains form an alternating ring which encloses part of the gamma chain. F(1) is attached to F(0) by a central stalk formed by the gamma and epsilon chains, while a peripheral stalk is formed by the delta, b and b' chains.

The protein localises to the cellular thylakoid membrane. In terms of biological role, f(1)F(0) ATP synthase produces ATP from ADP in the presence of a proton or sodium gradient. F-type ATPases consist of two structural domains, F(1) containing the extramembraneous catalytic core and F(0) containing the membrane proton channel, linked together by a central stalk and a peripheral stalk. During catalysis, ATP synthesis in the catalytic domain of F(1) is coupled via a rotary mechanism of the central stalk subunits to proton translocation. This protein is part of the stalk that links CF(0) to CF(1). It either transmits conformational changes from CF(0) to CF(1) or is implicated in proton conduction. The chain is ATP synthase subunit delta from Prochlorococcus marinus subsp. pastoris (strain CCMP1986 / NIES-2087 / MED4).